A 307-amino-acid chain; its full sequence is 2-dehydropantoate 2-reductase (307 aa).

NADP(+)-binding positions include 7 to 12 (GSGAMG), N102, and A128. N102 is a substrate binding site. K184 (proton donor) is an active-site residue. Substrate contacts are provided by N188, N192, and S255. E268 lines the NADP(+) pocket.

Belongs to the ketopantoate reductase family.

Its subcellular location is the cytoplasm. The enzyme catalyses (R)-pantoate + NADP(+) = 2-dehydropantoate + NADPH + H(+). The protein operates within cofactor biosynthesis; (R)-pantothenate biosynthesis; (R)-pantoate from 3-methyl-2-oxobutanoate: step 2/2. Catalyzes the NADPH-dependent reduction of ketopantoate into pantoic acid. This Streptococcus pyogenes serotype M18 (strain MGAS8232) protein is 2-dehydropantoate 2-reductase (apbA).